Here is a 311-residue protein sequence, read N- to C-terminus: Acetyl-coenzyme A carboxylase carboxyl transferase subunit alpha (311 aa).

A CoA carboxyltransferase C-terminal domain is found at 36–286 (ELKKEVERVY…VNYFLKSLEE (251 aa)).

It belongs to the AccA family. Acetyl-CoA carboxylase is a heterohexamer composed of biotin carboxyl carrier protein (AccB), biotin carboxylase (AccC) and two subunits each of ACCase subunit alpha (AccA) and ACCase subunit beta (AccD).

It localises to the cytoplasm. The enzyme catalyses N(6)-carboxybiotinyl-L-lysyl-[protein] + acetyl-CoA = N(6)-biotinyl-L-lysyl-[protein] + malonyl-CoA. It participates in lipid metabolism; malonyl-CoA biosynthesis; malonyl-CoA from acetyl-CoA: step 1/1. Component of the acetyl coenzyme A carboxylase (ACC) complex. First, biotin carboxylase catalyzes the carboxylation of biotin on its carrier protein (BCCP) and then the CO(2) group is transferred by the carboxyltransferase to acetyl-CoA to form malonyl-CoA. The chain is Acetyl-coenzyme A carboxylase carboxyl transferase subunit alpha from Wolinella succinogenes (strain ATCC 29543 / DSM 1740 / CCUG 13145 / JCM 31913 / LMG 7466 / NCTC 11488 / FDC 602W) (Vibrio succinogenes).